The primary structure comprises 430 residues: Keratin, type I cytoskeletal 18 (430 aa).

Serine 2 is subject to N-acetylserine. Positions 2-79 are head; that stretch reads SFTTRSTFST…GLAGMGGIQN (78 aa). Phosphoserine is present on residues serine 7, serine 10, serine 15, and serine 18. 2 positions are modified to phosphoserine; alternate: serine 30 and serine 31. Residues serine 30 and serine 31 are each glycosylated (O-linked (GlcNAc) serine; alternate). Position 34 is a phosphoserine; by CDK1 (serine 34). Tyrosine 36 bears the Phosphotyrosine mark. Position 42 is a phosphoserine (serine 42). Omega-N-methylarginine is present on arginine 45. Serine 49 carries the phosphoserine; alternate modification. An O-linked (GlcNAc) serine; alternate glycan is attached at serine 49. Serine 51 carries the phosphoserine; by MAPKAPK2 and MAPKAPK3 modification. A Phosphothreonine modification is found at threonine 52. Serine 53 carries the post-translational modification Phosphoserine; by CAMK, PKC/PRKCE and AURKA. Residue arginine 55 is modified to Omega-N-methylarginine. Serine 60 carries the post-translational modification Phosphoserine. Threonine 65 carries the phosphothreonine modification. The necessary for interaction with PNN stretch occupies residues 70–373; the sequence is GLAGMGGIQN…EALLNIKVKL (304 aa). The interaction with TRADD stretch occupies residues 77-128; it reads IQNEKETMQSLNDRLASYLDRVRSLETENRRLESKIREHLEKKGPQVRDWSH. The coil 1A stretch occupies residues 80–115; that stretch reads EKETMQSLNDRLASYLDRVRSLETENRRLESKIREH. The IF rod domain maps to 80-391; sequence EKETMQSLND…RLLEDGEDFN (312 aa). Lysine 81 is covalently cross-linked (Glycyl lysine isopeptide (Lys-Gly) (interchain with G-Cter in SUMO2)). Phosphoserine occurs at positions 93 and 100. The segment at 116-132 is linker 1; that stretch reads LEKKGPQVRDWSHYFKI. Lysine 131 is subject to N6-acetyllysine. The segment at 133-224 is coil 1B; that stretch reads IEDLRAQIFA…KNHEEEVKGL (92 aa). At serine 177 the chain carries Phosphoserine. The tract at residues 225–248 is linker 12; sequence QAQIASSGLTVEVDAPKSQDLAKI. The interval 243 to 391 is interaction with DNAJB6; sequence QDLAKIMADI…RLLEDGEDFN (149 aa). A Glycyl lysine isopeptide (Lys-Gly) (interchain with G-Cter in SUMO2) cross-link involves residue lysine 247. Residues 249–387 form a coil 2 region; the sequence is MADIRAQYDE…ATYRRLLEDG (139 aa). Threonine 302 bears the Phosphothreonine mark. Residues serine 305, serine 319, and serine 323 each carry the phosphoserine modification. Glycyl lysine isopeptide (Lys-Gly) (interchain with G-Cter in SUMO2) cross-links involve residues lysine 370 and lysine 372. Positions 388–430 are tail; it reads EDFNLGDALDSSNSMQTIQKTTTRRIVDGKVVSETNDTKVLRH. 3 positions are modified to phosphoserine: serine 398, serine 399, and serine 401. Threonine 404 is modified (phosphothreonine). Residue lysine 417 forms a Glycyl lysine isopeptide (Lys-Gly) (interchain with G-Cter in SUMO2) linkage. Lysine 426 carries the N6-acetyllysine; alternate modification. Lysine 426 is covalently cross-linked (Glycyl lysine isopeptide (Lys-Gly) (interchain with G-Cter in SUMO1); alternate). Lysine 426 is covalently cross-linked (Glycyl lysine isopeptide (Lys-Gly) (interchain with G-Cter in SUMO2); alternate).

Belongs to the intermediate filament family. Heterotetramer of two type I and two type II keratins. KRT18 associates with KRT8. Interacts with PLEC isoform 1C, when in a heterodimer with KRT8. Interacts with the thrombin-antithrombin complex. Interacts with PNN and mutated CFTR. Interacts with YWHAE, YWHAH and YWHAZ only when phosphorylated. Interacts with DNAJB6, TCHP and TRADD. Interacts with FAM83H. Interacts with EPPK1. Interacts with PKP1 and PKP2. As to quaternary structure, (Microbial infection) Interacts with hepatitis C virus/HCV core protein. Post-translationally, phosphorylation at Ser-34 increases during mitosis. Hyperphosphorylated at Ser-53 in diseased cirrhosis liver. Phosphorylation increases by IL-6. Proteolytically cleaved by caspases during epithelial cell apoptosis. Cleavage occurs at Asp-238 by either caspase-3, caspase-6 or caspase-7. In terms of processing, O-GlcNAcylation increases solubility, and decreases stability by inducing proteasomal degradation. Expressed in colon, placenta, liver and very weakly in exocervix. Increased expression observed in lymph nodes of breast carcinoma.

The protein resides in the nucleus matrix. Its subcellular location is the cytoplasm. It localises to the perinuclear region. It is found in the nucleus. The protein localises to the nucleolus. Its function is as follows. Involved in the uptake of thrombin-antithrombin complexes by hepatic cells. When phosphorylated, plays a role in filament reorganization. Involved in the delivery of mutated CFTR to the plasma membrane. Together with KRT8, is involved in interleukin-6 (IL-6)-mediated barrier protection. This Homo sapiens (Human) protein is Keratin, type I cytoskeletal 18 (KRT18).